Consider the following 289-residue polypeptide: Melatonin receptor type 1B (289 aa).

Residues 1–2 are Cytoplasmic-facing; it reads GN. The chain crosses the membrane as a helical span at residues 3 to 23; that stretch reads AFVVSLALADLVVALYPYPLV. The Extracellular portion of the chain corresponds to 24 to 41; it reads LLAIFHNGWTLGEMHCKV. A disulfide bridge connects residues Cys39 and Cys116. The chain crosses the membrane as a helical span at residues 42-62; the sequence is SGFVMGLSVIGSIFNITAIAI. Topologically, residues 63–81 are cytoplasmic; it reads NRYCYICHSFAYDKVYSCW. Residues 82–102 traverse the membrane as a helical segment; sequence NTMLYVSLIWVLTVIATVPNF. Topologically, residues 103 to 126 are extracellular; it reads FVGSLKYDPRIYSCTFVQTASSYY. A helical membrane pass occupies residues 127–147; that stretch reads TIAVVVIHFIVPITVVSFCYL. Residues 148–179 are Cytoplasmic-facing; the sequence is RIWVLVLQVRRRVKSETKPRLKPSDFRNFLTM. Residues 180-200 form a helical membrane-spanning segment; it reads FVVFVIFAFCWAPLNFIGLAV. Residues 201 to 213 are Extracellular-facing; the sequence is AINPSEMAPKVPE. The helical transmembrane segment at 214-234 threads the bilayer; the sequence is WLFIISYFMAYFNSCLNAIIY. The Cytoplasmic portion of the chain corresponds to 235–289; the sequence is GLLNQNFRNEYKRILMSLWMPRLFFQDTSKGGTDGQKSKPSPALNNNDQMKTDTL. The disordered stretch occupies residues 264 to 289; that stretch reads KGGTDGQKSKPSPALNNNDQMKTDTL.

It belongs to the G-protein coupled receptor 1 family. Brain and kidney, with trace levels in lungs.

It is found in the cell membrane. Its function is as follows. High affinity receptor for melatonin. The activity of this receptor is mediated by pertussis toxin sensitive G proteins that inhibits adenylate cyclase activity. The sequence is that of Melatonin receptor type 1B from Gallus gallus (Chicken).